Here is a 324-residue protein sequence, read N- to C-terminus: [Acyl-carrier-protein] phosphodiesterase PptH (324 aa).

3 residues coordinate Mn(2+): Asp-22, His-24, and Asp-51. Fe cation is bound by residues Asp-51, Asn-79, His-205, and His-246. Mn(2+) is bound at residue His-248.

Belongs to the metallophosphoesterase superfamily. It depends on Fe(3+) as a cofactor. Mn(2+) serves as cofactor.

It catalyses the reaction holo-[ACP] + H2O = apo-[ACP] + (R)-4'-phosphopantetheine + H(+). Functionally, catalyzes the hydrolysis of the phosphopantetheine group from substrate holo-carrier proteins. The sequence is that of [Acyl-carrier-protein] phosphodiesterase PptH from Mycobacterium tuberculosis (strain ATCC 25618 / H37Rv).